We begin with the raw amino-acid sequence, 1178 residues long: Zinc finger CCHC domain-containing protein 2 (1178 aa).

4 disordered regions span residues 1 to 90, 207 to 249, 557 to 683, and 936 to 986; these read MLRM…GPSA, AARG…RVGG, VTSA…SVNQ, and LSTA…SDST. The segment covering 43–67 has biased composition (pro residues); the sequence is PPPPPPPPAGPSRGPLPPPPPPRGL. The span at 75–88 shows a compositional bias: gly residues; that stretch reads AAAGAGMPGGGGGP. Positions 208–219 are enriched in basic and acidic residues; it reads ARGEGSRGGAED. Residues 220–229 show a composition bias toward acidic residues; it reads ERGEDGDGEQ. At serine 236 the chain carries Phosphoserine. Over residues 580-594 the composition is skewed to basic and acidic residues; sequence PQTEKEKIKKTDNRL. Polar residues predominate over residues 595-607; that stretch reads NSRINGIRLSTPQ. A compositionally biased stretch (low complexity) spans 632-641; that stretch reads SSESYSSPSS. Residues 642–661 show a composition bias toward basic and acidic residues; sequence PRHDGRESFESEEEKDRDTD. The segment covering 665–683 has biased composition (polar residues); that stretch reads EDSGNPSTTRFTGYGSVNQ. Over residues 937–948 the composition is skewed to low complexity; that stretch reads STAATSPQPASA. A compositionally biased stretch (pro residues) spans 959–973; sequence PAVPTHTPGPAPSPS. A compositionally biased stretch (polar residues) spans 974-986; sequence PALTHSTAQSDST. A CCHC-type zinc finger spans residues 1131–1148; it reads VSCYNCGVSGHYAQDCKQ.

This is Zinc finger CCHC domain-containing protein 2 from Homo sapiens (Human).